A 253-amino-acid polypeptide reads, in one-letter code: Retinoic acid early-inducible protein 1-gamma (253 aa).

Residues methionine 1–glycine 28 form the signal peptide. A disulfide bond links cysteine 37 and cysteine 56. N-linked (GlcNAc...) asparagine glycosylation is found at asparagine 38, asparagine 70, asparagine 83, asparagine 143, and asparagine 156. The cysteines at positions 90 and 190 are disulfide-linked. The disordered stretch occupies residues leucine 198 to threonine 230. Residues serine 211–serine 221 are compositionally biased toward low complexity. A lipid anchor (GPI-anchor amidated serine) is attached at serine 227. The propeptide at histidine 228–methionine 253 is removed in mature form.

It belongs to the NKG2D ligand family. Post-translationally, glycosylated. Expressed predominantly in embryonic brain.

It is found in the cell membrane. Functionally, acts as a ligand for KLRK1. The chain is Retinoic acid early-inducible protein 1-gamma (Raet1c) from Mus musculus (Mouse).